The primary structure comprises 359 residues: Acyl-CoA desaturase (359 aa).

Topologically, residues 1–72 are cytoplasmic; the sequence is MPAHLLQEEI…EGPKPKLEYV (72 aa). The chain crosses the membrane as a helical span at residues 73-93; that stretch reads WRNIILMGLLHLGALYGITLI. Asparagine 75 serves as a coordination point for substrate. At 94–97 the chain is on the lumenal side; it reads PTCK. Residues 98–118 traverse the membrane as a helical segment; it reads IYTFLWVLFYYVISALGITAG. The Cytoplasmic portion of the chain corresponds to 119-217; that stretch reads VHRLWSHRTY…EKLVMFQRRY (99 aa). Fe cation is bound by residues histidine 120 and histidine 125. Positions 120–125 match the Histidine box-1 motif; it reads HRLWSH. Substrate contacts are provided by asparagine 148, arginine 155, and aspartate 156. Residues histidine 157, histidine 160, and histidine 161 each coordinate Fe cation. A Histidine box-2 motif is present at residues 157 to 161; the sequence is HRAHH. Arginine 188 and lysine 189 together coordinate substrate. Serine 203 bears the Phosphoserine mark. The chain crosses the membrane as a helical span at residues 218–237; the sequence is YKPGVLLLCFILPTLVPWYL. At 238-241 the chain is on the lumenal side; the sequence is WGES. A helical transmembrane segment spans residues 242 to 263; the sequence is FQNSLFFATFLRYAVVLNATWL. Tryptophan 262 is a binding site for substrate. At 264–359 the chain is on the cytoplasmic side; that stretch reads VNSAAHMYGY…RTGEESYKSG (96 aa). Positions 269, 298, 301, and 302 each coordinate Fe cation. Positions 298 to 302 match the Histidine box-3 motif; sequence HNYHH.

It belongs to the fatty acid desaturase type 1 family. It depends on Fe(2+) as a cofactor.

It is found in the endoplasmic reticulum membrane. The enzyme catalyses octadecanoyl-CoA + 2 Fe(II)-[cytochrome b5] + O2 + 2 H(+) = (9Z)-octadecenoyl-CoA + 2 Fe(III)-[cytochrome b5] + 2 H2O. Its function is as follows. Stearoyl-CoA desaturase that utilizes O(2) and electrons from reduced cytochrome b5 to introduce the first double bond into saturated fatty acyl-CoA substrates. Catalyzes the insertion of a cis double bond at the delta-9 position into fatty acyl-CoA substrates including palmitoyl-CoA and stearoyl-CoA. Gives rise to a mixture of 16:1 and 18:1 unsaturated fatty acids. Plays an important role in lipid biosynthesis. Plays an important role in regulating the expression of genes that are involved in lipogenesis and in regulating mitochondrial fatty acid oxidation. Plays an important role in body energy homeostasis. Contributes to the biosynthesis of membrane phospholipids, cholesterol esters and triglycerides. The polypeptide is Acyl-CoA desaturase (SCD) (Ovis aries (Sheep)).